Here is a 657-residue protein sequence, read N- to C-terminus: Knob-associated histidine-rich protein (657 aa).

Residues 1–34 form the signal peptide; that stretch reads MKSFKNKNTLRRKKAFPVFTKILLVSFLVWVLKC. N42 is a glycosylation site (N-linked (GlcNAc...) asparagine). The span at 57–76 shows a compositional bias: basic residues; that stretch reads AQKQHEHHHHHHHHHHHQHQ. 3 disordered regions span residues 57 to 138, 282 to 301, and 352 to 657; these read AQKQ…PSNE, AHDGSHGNLRGHDNKGSEGY, and VNKY…GCCG. Residues 99 to 108 are compositionally biased toward low complexity; sequence PQVHQQVHGQ. Basic residues predominate over residues 112–123; sequence HHHHHHHHHHLH. 2 stretches are compositionally biased toward basic and acidic residues: residues 357–378 and 399–408; these read KHGDEKHHSSKKHEGNDGEGEK and KDNEDAESVK. Residues 409–425 are compositionally biased toward basic residues; sequence SKKHKSHDCEKKKSKKH. Positions 426 to 435 are enriched in basic and acidic residues; it reads KDNEDAESVK. Residues 453 to 468 show a composition bias toward basic residues; that stretch reads AAKKLTKKIKIKKKTN. Residues 473–496 show a composition bias toward basic and acidic residues; sequence DGSKAHEKKENETKNTAGENKKVD. Polar residues predominate over residues 497 to 508; the sequence is STSADNKSTNAA. Composition is skewed to basic and acidic residues over residues 512 to 523 and 551 to 578; these read AKDKTQGGKTDK and STSKEATKEASTSKEATKEASTSKEATK. Residues 590–614 show a composition bias toward low complexity; that stretch reads ASTTEGATKGASTTAGSTTGATTGA. The span at 628–643 shows a compositional bias: polar residues; sequence AANNGEQVMSRGQAQL. Basic residues predominate over residues 648–657; the sequence is KKKKKRGCCG.

Its subcellular location is the secreted. In terms of biological role, KAHRP might mimick human histidine-rich glycoproteins to anchor host thrombospondin or a parasite analog in a binding complex with the endothelial cell receptor. This Plasmodium falciparum (isolate NF7 / Ghana) protein is Knob-associated histidine-rich protein (SD17).